The primary structure comprises 359 residues: Phospho-N-acetylmuramoyl-pentapeptide-transferase (359 aa).

Helical transmembrane passes span 21–41, 73–93, 98–118, 143–163, 166–186, 202–222, 237–257, 261–281, 286–306, and 336–356; these read YITF…FLLG, TMGG…WADL, IWVT…DDYL, GICL…VPFF, VAPD…VGTS, PLVI…NAII, VTVF…FNAY, IFMG…VAII, ILLT…IFQV, and KIIV…VSTL.

The protein belongs to the glycosyltransferase 4 family. MraY subfamily. Mg(2+) is required as a cofactor.

The protein resides in the cell inner membrane. The enzyme catalyses UDP-N-acetyl-alpha-D-muramoyl-L-alanyl-gamma-D-glutamyl-meso-2,6-diaminopimeloyl-D-alanyl-D-alanine + di-trans,octa-cis-undecaprenyl phosphate = di-trans,octa-cis-undecaprenyl diphospho-N-acetyl-alpha-D-muramoyl-L-alanyl-D-glutamyl-meso-2,6-diaminopimeloyl-D-alanyl-D-alanine + UMP. The protein operates within cell wall biogenesis; peptidoglycan biosynthesis. In terms of biological role, catalyzes the initial step of the lipid cycle reactions in the biosynthesis of the cell wall peptidoglycan: transfers peptidoglycan precursor phospho-MurNAc-pentapeptide from UDP-MurNAc-pentapeptide onto the lipid carrier undecaprenyl phosphate, yielding undecaprenyl-pyrophosphoryl-MurNAc-pentapeptide, known as lipid I. This chain is Phospho-N-acetylmuramoyl-pentapeptide-transferase, found in Desulfosudis oleivorans (strain DSM 6200 / JCM 39069 / Hxd3) (Desulfococcus oleovorans).